The primary structure comprises 314 residues: Formate-nitrite transporter (314 aa).

At 1-47 the chain is on the cytoplasmic side; the sequence is MSKGKSKYVIDPISVKTACTSEESYIRCVEYGKGKAHYPNLSLLAKA. Residues 48–68 traverse the membrane as a helical segment; sequence ILAGVFVGVCAHASGIAGGHF. Over 69-78 the chain is Extracellular; that stretch reads YYHKLREYVG. The chain crosses the membrane as a helical span at residues 79–99; sequence ISMSAFVYGFTFPIAFLCIIA. Topologically, residues 100 to 128 are cytoplasmic; it reads TGSDLFTGNTLAVTTALLQRKVSLLQYLR. The helical transmembrane segment at 129 to 149 threads the bilayer; sequence VMSISLFGNYLGAVSFAFFVS. At 150-185 the chain is on the extracellular side; that stretch reads HLSGAYEKHTDVTKNHIFQFLNDIAEKKISHTFIQC. The chain crosses the membrane as a helical span at residues 186-206; it reads ICLAIGCNIFVCLAVYFVLTI. Topologically, residues 207–211 are cytoplasmic; it reads KDGSG. The helical transmembrane segment at 212–232 threads the bilayer; the sequence is MVFSVFFAVYAFAIAGYEHII. Residues 233 to 257 lie on the Extracellular side of the membrane; that stretch reads ANMYTLNLALMVEAKVTWSKVYFHN. A helical transmembrane segment spans residues 258–278; that stretch reads LLPTLIGNYIAGALVLACPLF. The Cytoplasmic portion of the chain corresponds to 279 to 314; sequence YIYRNSYRDYERTRGDGSNCGLRSLSIEMQNGSNGN.

The protein belongs to the FNT transporter (TC 1.A.16) family. Homopentamer.

It is found in the cell membrane. The protein localises to the vacuole membrane. It catalyses the reaction (S)-lactate(in) + H(+)(in) = (S)-lactate(out) + H(+)(out). The catalysed reaction is formate(in) + H(+)(in) = formate(out) + H(+)(out). The enzyme catalyses pyruvate(out) + H(+)(out) = pyruvate(in) + H(+)(in). It carries out the reaction acetate(out) + H(+)(out) = acetate(in) + H(+)(in). Its activity is regulated as follows. Inhibited by the Malaria Box compound MMV007839 and its derivatives BH296 and BH267.meta. In terms of biological role, monocarboxylate-proton symporter that mediates the efflux of the waste product lactate in the intraerythrocytic parasites; active in acidic-to-neutral pH range. Transports L-lactate. The polypeptide is Formate-nitrite transporter (Plasmodium knowlesi (strain H)).